The primary structure comprises 257 residues: UPF0246 protein Sputcn32_1053 (257 aa).

This sequence belongs to the UPF0246 family.

The protein is UPF0246 protein Sputcn32_1053 of Shewanella putrefaciens (strain CN-32 / ATCC BAA-453).